Here is a 375-residue protein sequence, read N- to C-terminus: 23S rRNA (uracil(747)-C(5))-methyltransferase RlmC (375 aa).

The [4Fe-4S] cluster site is built by cysteine 3, cysteine 11, cysteine 14, and cysteine 87. 4 residues coordinate S-adenosyl-L-methionine: glutamine 212, phenylalanine 241, glutamate 262, and asparagine 307. Cysteine 334 serves as the catalytic Nucleophile.

It belongs to the class I-like SAM-binding methyltransferase superfamily. RNA M5U methyltransferase family. RlmC subfamily.

It carries out the reaction uridine(747) in 23S rRNA + S-adenosyl-L-methionine = 5-methyluridine(747) in 23S rRNA + S-adenosyl-L-homocysteine + H(+). In terms of biological role, catalyzes the formation of 5-methyl-uridine at position 747 (m5U747) in 23S rRNA. The polypeptide is 23S rRNA (uracil(747)-C(5))-methyltransferase RlmC (Escherichia coli (strain K12 / MC4100 / BW2952)).